A 219-amino-acid chain; its full sequence is Ribose-5-phosphate isomerase A (219 aa).

Residues 28 to 31, 81 to 84, and 94 to 97 each bind substrate; these read SGST, DGAD, and KGGG. Glu-103 serves as the catalytic Proton acceptor. Lys-121 contacts substrate.

Belongs to the ribose 5-phosphate isomerase family. Homodimer.

The enzyme catalyses aldehydo-D-ribose 5-phosphate = D-ribulose 5-phosphate. It functions in the pathway carbohydrate degradation; pentose phosphate pathway; D-ribose 5-phosphate from D-ribulose 5-phosphate (non-oxidative stage): step 1/1. Catalyzes the reversible conversion of ribose-5-phosphate to ribulose 5-phosphate. This is Ribose-5-phosphate isomerase A from Haemophilus influenzae (strain PittEE).